The sequence spans 130 residues: MKALLALGFLASWVAAGEHALRGECPADPLPCQELCTGDESCPQGHKCCSTGCGHACRGDIEGGRDGQCPRILVGLCIVQCMMDENCQSGERCCKSGCGRFCIPGLQPLQQLKDSNLTDGFNSKLEAQAP.

An N-terminal signal peptide occupies residues M1–A16. WAP domains are found at residues G17 to I61 and E62 to L106. Cystine bridges form between C25/C49, C32/C53, C36/C48, C42/C57, C69/C94, C77/C98, C81/C93, and C87/C102. A glycan (N-linked (GlcNAc...) asparagine) is linked at N116.

Its subcellular location is the secreted. The chain is WAP four-disulfide core domain protein 3 (Wfdc3) from Mus musculus (Mouse).